A 154-amino-acid chain; its full sequence is MAARLCCQLDPARDVLCLRPVGAESRGRPLPGPLGALPPASPPIVPSDHGAHLSLRGLPVCAFSSAGPCALRFTSARRMETTVNAHWNLPKVLHKRTLGLSAMSTTDLEAYFKDCVFTEWEELGEEFRLKVFVLGGCRHKLVCSPAPCNFFTSA.

Residues 68-117 are mitochondrial targeting sequence; that stretch reads PCALRFTSARRMETTVNAHWNLPKVLHKRTLGLSAMSTTDLEAYFKDCVF.

The protein belongs to the orthohepadnavirus protein X family. As to quaternary structure, may form homodimer. May interact with host CEBPA, CFLAR, CREB1, DDB1, E4F1, HBXIP, HSPD1/HSP60, NFKBIA, POLR2E and SMAD4. Interacts with host SMC5-SMC6 complex and induces its degradation. Interacts with host TRPC4AP; leading to prevent ubiquitination of TRPC4AP. Interacts with host PLSCR1; this interaction promotes ubiquitination and degradation of HBx and impairs HBx-mediated cell proliferation. A fraction may be phosphorylated in insect cells and HepG2 cells, a human hepatoblastoma cell line. Phosphorylated in vitro by host protein kinase C or mitogen-activated protein kinase. N-acetylated in insect cells.

Its subcellular location is the host cytoplasm. It is found in the host nucleus. It localises to the host mitochondrion. Functionally, multifunctional protein that plays a role in silencing host antiviral defenses and promoting viral transcription. Does not seem to be essential for HBV infection. May be directly involved in development of cirrhosis and liver cancer (hepatocellular carcinoma). Most of cytosolic activities involve modulation of cytosolic calcium. The effect on apoptosis is controversial depending on the cell types in which the studies have been conducted. May induce apoptosis by localizing in mitochondria and causing loss of mitochondrial membrane potential. May also modulate apoptosis by binding host CFLAR, a key regulator of the death-inducing signaling complex (DISC). Promotes viral transcription by using the host E3 ubiquitin ligase DDB1 to target the SMC5-SMC6 complex to proteasomal degradation. This host complex would otherwise bind to viral episomal DNA, and prevents its transcription. Moderately stimulates transcription of many different viral and cellular transcription elements. Promoters and enhancers stimulated by HBx contain DNA binding sites for NF-kappa-B, AP-1, AP-2, c-EBP, ATF/CREB, or the calcium-activated factor NF-AT. The chain is Protein X from Hepatitis B virus genotype B2 (isolate Vietnam/9873/1997) (HBV-B).